The sequence spans 470 residues: Na(+)/H(+) antiporter NhaA 2 (470 aa).

11 helical membrane passes run 34-54 (FLHI…IALL), 85-105 (LEWV…GMEI), 121-141 (ALPA…YLLL), 150-170 (GWGV…TLLG), 179-199 (VLLL…IAVF), 202-222 (SGVA…VFAM), 241-261 (WAGV…IGLI), 317-337 (SLIA…FALA), 357-377 (LATA…ACWL), 395-415 (LLVL…IAQL), and 423-443 (LAAG…VALV).

The protein belongs to the NhaA Na(+)/H(+) (TC 2.A.33) antiporter family.

It is found in the cell inner membrane. The enzyme catalyses Na(+)(in) + 2 H(+)(out) = Na(+)(out) + 2 H(+)(in). Na(+)/H(+) antiporter that extrudes sodium in exchange for external protons. This is Na(+)/H(+) antiporter NhaA 2 from Myxococcus xanthus (strain DK1622).